The primary structure comprises 546 residues: Immunoglobulin heavy constant epsilon (546 aa).

Topologically, residues 1–499 are extracellular; it reads ASTQSPSVFP…EAPWTWTGLC (499 aa). Ig-like domains lie at 6–103, 112–210, 214–318, and 324–423; these read PSVF…KTFS, PTVK…KKCA, PRGV…TKTS, and PEVY…RAVS. Intrachain disulfides connect Cys15–Cys105, Cys29–Cys85, Cys135–Cys193, Cys239–Cys299, and Cys345–Cys405. N-linked (GlcNAc...) asparagine glycans are attached at residues Asn21, Asn49, Asn99, Asn146, Asn252, Asn264, and Asn275. A helical membrane pass occupies residues 500–520; sequence IFAALFLLSVSYSAAITLLMV. At 521 to 546 the chain is on the cytoplasmic side; the sequence is QRFLSATRQGRPQTSLDYTNVLQPHA.

In terms of assembly, the basic structural unit of both sIgE and mIgE molecules consists of two identical heavy chains and two identical light chains; disulfide-linked. N-terminal variable regions of the heavy and light chains form the antigen binding sites, whereas the C-terminal constant regions of the heavy chains interact with immune receptors to mediate effector functions. As to quaternary structure, part of IgE antibody. Interacts (via CH3) with the alpha chain/FCE1RA of IgE Fc receptor complex. Interacts (via CH3 region) with FCER2 (via C-type lectin domain); this interaction regulates IgE homeostasis. Part of IgE B cell antigen receptor complex (BCR). The BCR complex consists of one mIgE molecule responsible for antigen binding, non-covalently associated with CD79A and CD79B signaling chains. Expressed in B lymphocytes stimulated with IL4 and CD40.

It is found in the secreted. It localises to the cell membrane. Functionally, constant region of immunoglobulin heavy chains. Immunoglobulins, also known as antibodies, are membrane-bound or secreted glycoproteins produced by B lymphocytes. In the recognition phase of humoral immunity, the membrane-bound immunoglobulins serve as receptors which, upon binding of a specific antigen, trigger the clonal expansion and differentiation of B lymphocytes into immunoglobulins-secreting plasma cells. Secreted immunoglobulins mediate the effector phase of humoral immunity, which results in the elimination of bound antigens. The antigen binding site is formed by the variable domain of one heavy chain, together with that of its associated light chain. Thus, each immunoglobulin has two antigen binding sites with remarkable affinity for a particular antigen. The variable domains are assembled by a process called V-(D)-J rearrangement and can then be subjected to somatic hypermutations which, after exposure to antigen and selection, allow affinity maturation for a particular antigen. Constant region of secreted IgE, also known as the Fc region of IgE antibody. Mediates IgE effector functions on myeloid and lymphoid cells primarily via two Fc receptors, the high-affinity IgE Fc receptor complex/FCER1A:MS4A2:FCGR1A and the low-affinity FCER2 receptor, which upon antigen/allergen cross-linking initiate signaling pathways that lead to immune cell activation and differentiation. Triggers the immediate hypersensitivity response to allergens as a host defense mechanism against helminth parasites, pathogenic bacteria and venom toxicity. When dysregulated, it can elicit harmful life-threatening allergic and anaphylactic reactions. Stimulates the high-affinity IgE Fc receptor complex/FCER1A:MS4A2:FCGR1A on mast cells, basophils and eosinophils leading to secretion of vasoactive amines, lipid mediators and cytokines that contribute to inflammatory response, tissue remodeling and cytotoxicity against microbes. On macrophages, cross-linking of FCER2 by IgE immune complexes induces intracellular killing of parasites through activation of L-Arginine-nitric oxide pathway. Activates macrophages to kill tumor cells via antigen-specific antibody-dependent cytotoxicity (ADCC). Triggers differentiation of quiescent M0 macrophages toward M1 state and reprograms M2 macrophages toward a proinflammatory state with antitumor functions. Stimulates FCER2 on B cells and initiates IgE-dependent antigen uptake and presentation to T cells. In terms of biological role, constant region of membrane-bound IgE (long mIgE), part of the B cell receptor complex (BCR). Upon antigen cross-linking triggers quick BCR signaling, ensuring survival of IgE-switched B cells and differentiation into plasma cells, thus regulating both primary and memory IgE responses. Its function is as follows. Constant region of membrane-bound IgE (short mIgE), part of the B cell receptor complex (BCR). Upon antigen cross-linking initiates slower but sustained BCR signaling that negatively regulates mature B cell proliferation. In Homo sapiens (Human), this protein is Immunoglobulin heavy constant epsilon.